The chain runs to 249 residues: DNA polymerase sliding clamp 1 (249 aa).

Belongs to the PCNA family. In terms of assembly, homotrimer. The subunits circularize to form a toroid; DNA passes through its center. Replication factor C (RFC) is required to load the toroid on the DNA.

Functionally, sliding clamp subunit that acts as a moving platform for DNA processing. Responsible for tethering the catalytic subunit of DNA polymerase and other proteins to DNA during high-speed replication. This Pyrobaculum aerophilum (strain ATCC 51768 / DSM 7523 / JCM 9630 / CIP 104966 / NBRC 100827 / IM2) protein is DNA polymerase sliding clamp 1.